A 360-amino-acid polypeptide reads, in one-letter code: MTATPEVQKSIEEVYTKLQGASDCSSLLKKHLTKDVVAKNKSKKTRLGATLLDVIQSGGENLDSGVGIYAPDAESYTLFADLFNPVIEEYHNGFKATDTQPAMDLGEKNVGELADLDPEGKFIVSTRIRCGRSLQGYPFNPCLSETNYKMMETRMKEIFNSITDPELKGTYYPLTGMDEETKKKLIADHFLFKEGDRFLKAANANRYWPNGRGIFHNEKKTFLVWVNEEDHLRIISMQNGGNVGEVLARLIKGLNLVAAKAPFARHPRLGWLTFCPTNLGTTVRASVHIKLPKISAKDDFKKICSDMKLQIRGIHGEHSESKEGIYDISNKQRLGLTEYQAVRQMYDGLKKLIELEKAAA.

A Phosphagen kinase N-terminal domain is found at 10–92 (SIEEVYTKLQ…FNPVIEEYHN (83 aa)). 65–69 (GVGIY) lines the substrate pocket. The 238-residue stretch at 122–359 (FIVSTRIRCG…KKLIELEKAA (238 aa)) folds into the Phosphagen kinase C-terminal domain. Residues 125-129 (STRIR) and His189 each bind ATP. Glu229 serves as a coordination point for substrate. Arg233 lines the ATP pocket. Cys275 serves as a coordination point for substrate. Residues 284–288 (RASVH), 312–317 (RGIHGE), and Asp327 each bind ATP. Glu317 serves as a coordination point for substrate.

The protein belongs to the ATP:guanido phosphotransferase family.

It carries out the reaction L-arginine + ATP = N(omega)-phospho-L-arginine + ADP + H(+). The chain is Probable arginine kinase ZC434.8 from Caenorhabditis elegans.